The primary structure comprises 531 residues: Retinoid isomerohydrolase (531 aa).

The S-palmitoyl cysteine; in membrane form moiety is linked to residue Cys112. Fe cation contacts are provided by His180, His241, and His313. A lipid anchor (S-palmitoyl cysteine; in membrane form) is attached at Cys329. His526 contacts Fe cation.

It belongs to the carotenoid oxygenase family. Fe(2+) serves as cofactor. Palmitoylated. Retinal pigment epithelium-specific.

Its subcellular location is the cytoplasm. The protein localises to the cell membrane. The enzyme catalyses an all-trans-retinyl ester + H2O = 11-cis-retinol + a fatty acid + H(+). It catalyses the reaction lutein = (3R,3'S)-zeaxanthin. It carries out the reaction all-trans-retinyl hexadecanoate + H2O = 11-cis-retinol + hexadecanoate + H(+). Functionally, plays important roles in the production of 11-cis retinal and in visual pigment regeneration. Capable of catalyzing the isomerization of lutein to meso-zeaxanthin an eye-specific carotenoid. The protein is Retinoid isomerohydrolase (rpe65a) of Danio rerio (Zebrafish).